The sequence spans 255 residues: tRNA (guanine-N(1)-)-methyltransferase (255 aa).

S-adenosyl-L-methionine is bound by residues G113 and 133–138 (IGDYVL).

The protein belongs to the RNA methyltransferase TrmD family. Homodimer.

It localises to the cytoplasm. It carries out the reaction guanosine(37) in tRNA + S-adenosyl-L-methionine = N(1)-methylguanosine(37) in tRNA + S-adenosyl-L-homocysteine + H(+). Specifically methylates guanosine-37 in various tRNAs. The chain is tRNA (guanine-N(1)-)-methyltransferase from Chloroflexus aggregans (strain MD-66 / DSM 9485).